Reading from the N-terminus, the 275-residue chain is Phosphonoacetaldehyde hydrolase (275 aa).

The active-site Nucleophile is the Asp-15. Residues Asp-15 and Ala-17 each contribute to the Mg(2+) site. Lys-56 acts as the Schiff-base intermediate with substrate in catalysis. Asp-189 provides a ligand contact to Mg(2+).

The protein belongs to the HAD-like hydrolase superfamily. PhnX family. Homodimer. It depends on Mg(2+) as a cofactor.

The enzyme catalyses phosphonoacetaldehyde + H2O = acetaldehyde + phosphate + H(+). Its function is as follows. Involved in phosphonate degradation. This is Phosphonoacetaldehyde hydrolase from Pseudomonas paraeruginosa (strain DSM 24068 / PA7) (Pseudomonas aeruginosa (strain PA7)).